A 241-amino-acid chain; its full sequence is Xyloglucan-specific endo-beta-1,4-glucanase A (241 aa).

Positions methionine 1–alanine 16 are cleaved as a signal peptide. The N-linked (GlcNAc...) asparagine glycan is linked to asparagine 47.

Belongs to the glycosyl hydrolase 12 (cellulase H) family.

It is found in the secreted. The enzyme catalyses xyloglucan + H2O = xyloglucan oligosaccharides.. Its function is as follows. Catalyzes endohydrolysis of 1,4-beta-D-glucosidic linkages in xyloglucan with retention of the beta-configuration of the glycosyl residues. Specific for xyloglucan and does not hydrolyze other cell wall components. The sequence is that of Xyloglucan-specific endo-beta-1,4-glucanase A (xgeA) from Aspergillus niger.